A 108-amino-acid chain; its full sequence is uncharacterized protein (108 aa).

Positions 74–108 (TGSKKRDSKANSRSRPSGTITSRGARIGLQGYKSH) are disordered. The segment covering 84 to 95 (NSRSRPSGTITS) has biased composition (polar residues).

This is an uncharacterized protein from Saccharomyces cerevisiae (strain ATCC 204508 / S288c) (Baker's yeast).